Here is a 512-residue protein sequence, read N- to C-terminus: GMP synthase [glutamine-hydrolyzing] (512 aa).

In terms of domain architecture, Glutamine amidotransferase type-1 spans 7–197 (TIIVLDFGSQ…VFGVCGCSEG (191 aa)). Cys-84 acts as the Nucleophile in catalysis. Residues His-171 and Glu-173 contribute to the active site. Residues 198 to 387 (WNMENFIEVE…LGIPDEIVWR (190 aa)) form the GMPS ATP-PPase domain. 225–231 (SGGVDSS) lines the ATP pocket.

Homodimer.

It catalyses the reaction XMP + L-glutamine + ATP + H2O = GMP + L-glutamate + AMP + diphosphate + 2 H(+). It participates in purine metabolism; GMP biosynthesis; GMP from XMP (L-Gln route): step 1/1. In terms of biological role, catalyzes the synthesis of GMP from XMP. The chain is GMP synthase [glutamine-hydrolyzing] from Bacillus anthracis.